We begin with the raw amino-acid sequence, 406 residues long: Diaminopimelate decarboxylase (406 aa).

N6-(pyridoxal phosphate)lysine is present on K52. Pyridoxal 5'-phosphate-binding positions include G231 and 265-268 (EPGR). Substrate is bound by residues R268, R304, and Y308. C334 serves as the catalytic Proton donor. Positions 335 and 362 each coordinate substrate. Y362 provides a ligand contact to pyridoxal 5'-phosphate.

Belongs to the Orn/Lys/Arg decarboxylase class-II family. LysA subfamily. Homodimer. It depends on pyridoxal 5'-phosphate as a cofactor.

The enzyme catalyses meso-2,6-diaminopimelate + H(+) = L-lysine + CO2. It functions in the pathway amino-acid biosynthesis; L-lysine biosynthesis via DAP pathway; L-lysine from DL-2,6-diaminopimelate: step 1/1. Functionally, specifically catalyzes the decarboxylation of meso-diaminopimelate (meso-DAP) to L-lysine. This chain is Diaminopimelate decarboxylase, found in Neisseria meningitidis serogroup A / serotype 4A (strain DSM 15465 / Z2491).